The sequence spans 88 residues: Small ribosomal subunit protein bS20 (88 aa).

A disordered region spans residues 1–28 (MANTSSAKKATRKIARRTAVNKSRRTQM).

In terms of biological role, binds directly to 16S ribosomal RNA. The polypeptide is Small ribosomal subunit protein bS20 (Rhodopseudomonas palustris (strain ATCC BAA-98 / CGA009)).